The sequence spans 113 residues: UPF0122 protein Sez_1013 (113 aa).

It belongs to the UPF0122 family.

Its function is as follows. Might take part in the signal recognition particle (SRP) pathway. This is inferred from the conservation of its genetic proximity to ftsY/ffh. May be a regulatory protein. This is UPF0122 protein Sez_1013 from Streptococcus equi subsp. zooepidemicus (strain MGCS10565).